We begin with the raw amino-acid sequence, 97 residues long: Co-chaperonin GroES (97 aa).

It belongs to the GroES chaperonin family. As to quaternary structure, heptamer of 7 subunits arranged in a ring. Interacts with the chaperonin GroEL.

The protein resides in the cytoplasm. Functionally, together with the chaperonin GroEL, plays an essential role in assisting protein folding. The GroEL-GroES system forms a nano-cage that allows encapsulation of the non-native substrate proteins and provides a physical environment optimized to promote and accelerate protein folding. GroES binds to the apical surface of the GroEL ring, thereby capping the opening of the GroEL channel. The protein is Co-chaperonin GroES of Yersinia enterocolitica.